Consider the following 188-residue polypeptide: Surfactant protein C (188 aa).

A propeptide spanning residues 1–23 is cleaved from the precursor; sequence MDMGSKEALMESPPDYSAAPRGR. Residues Cys28 and Cys29 are each lipidated (S-palmitoyl cysteine). Positions 59 to 188 are excised as a propeptide; the sequence is HMSQKHTEMV…LCGEVPLIYI (130 aa). The 95-residue stretch at 94 to 188 folds into the BRICHOS domain; it reads FPIGSTGIVT…LCGEVPLIYI (95 aa). Residues Cys121 and Cys180 are joined by a disulfide bond. The tract at residues 144-164 is disordered; the sequence is NPAEPPTQRGQDKGPAAGPAS.

It localises to the secreted. It is found in the extracellular space. Its subcellular location is the surface film. In terms of biological role, pulmonary surfactant associated proteins promote alveolar stability by lowering the surface tension at the air-liquid interface in the peripheral air spaces. In Oryctolagus cuniculus (Rabbit), this protein is Surfactant protein C (SFTPC).